Here is a 212-residue protein sequence, read N- to C-terminus: Pyridoxine/pyridoxamine 5'-phosphate oxidase (212 aa).

Substrate contacts are provided by residues 7–10 (RAKY) and Lys-65. Residues 60–65 (RTVLLK), 75–76 (FT), Lys-82, and Gln-104 contribute to the FMN site. Substrate contacts are provided by Tyr-122, Arg-126, and Ser-130. Residues 139-140 (QS) and Trp-184 contribute to the FMN site. 190–192 (RLH) serves as a coordination point for substrate. Residue Arg-194 coordinates FMN.

It belongs to the pyridoxamine 5'-phosphate oxidase family. As to quaternary structure, homodimer. FMN is required as a cofactor.

It catalyses the reaction pyridoxamine 5'-phosphate + O2 + H2O = pyridoxal 5'-phosphate + H2O2 + NH4(+). It carries out the reaction pyridoxine 5'-phosphate + O2 = pyridoxal 5'-phosphate + H2O2. The protein operates within cofactor metabolism; pyridoxal 5'-phosphate salvage; pyridoxal 5'-phosphate from pyridoxamine 5'-phosphate: step 1/1. It participates in cofactor metabolism; pyridoxal 5'-phosphate salvage; pyridoxal 5'-phosphate from pyridoxine 5'-phosphate: step 1/1. Its function is as follows. Catalyzes the oxidation of either pyridoxine 5'-phosphate (PNP) or pyridoxamine 5'-phosphate (PMP) into pyridoxal 5'-phosphate (PLP). This is Pyridoxine/pyridoxamine 5'-phosphate oxidase from Aliarcobacter butzleri (strain RM4018) (Arcobacter butzleri).